The chain runs to 258 residues: 5'-nucleotidase SurE (258 aa).

Residues aspartate 9, aspartate 10, serine 42, and asparagine 96 each coordinate a divalent metal cation.

This sequence belongs to the SurE nucleotidase family. The cofactor is a divalent metal cation.

The protein localises to the cytoplasm. The catalysed reaction is a ribonucleoside 5'-phosphate + H2O = a ribonucleoside + phosphate. Its function is as follows. Nucleotidase that shows phosphatase activity on nucleoside 5'-monophosphates. The protein is 5'-nucleotidase SurE of Campylobacter jejuni subsp. jejuni serotype O:6 (strain 81116 / NCTC 11828).